Consider the following 404-residue polypeptide: Cysteine desulfurase IscS (404 aa).

Residues 75–76, asparagine 155, glutamine 183, and 203–205 each bind pyridoxal 5'-phosphate; these read AT and SGH. Position 206 is an N6-(pyridoxal phosphate)lysine (lysine 206). Residue threonine 243 participates in pyridoxal 5'-phosphate binding. Cysteine 328 serves as the catalytic Cysteine persulfide intermediate. A [2Fe-2S] cluster-binding site is contributed by cysteine 328.

Belongs to the class-V pyridoxal-phosphate-dependent aminotransferase family. NifS/IscS subfamily. In terms of assembly, homodimer. Forms a heterotetramer with IscU, interacts with other sulfur acceptors. Pyridoxal 5'-phosphate serves as cofactor.

Its subcellular location is the cytoplasm. The catalysed reaction is (sulfur carrier)-H + L-cysteine = (sulfur carrier)-SH + L-alanine. Its pathway is cofactor biosynthesis; iron-sulfur cluster biosynthesis. Functionally, master enzyme that delivers sulfur to a number of partners involved in Fe-S cluster assembly, tRNA modification or cofactor biosynthesis. Catalyzes the removal of elemental sulfur atoms from cysteine to produce alanine. Functions as a sulfur delivery protein for Fe-S cluster synthesis onto IscU, an Fe-S scaffold assembly protein, as well as other S acceptor proteins. The chain is Cysteine desulfurase IscS from Shewanella sp. (strain ANA-3).